Reading from the N-terminus, the 334-residue chain is Ornithine carbamoyltransferase (334 aa).

Carbamoyl phosphate-binding positions include 57–60 (STRT), glutamine 84, arginine 108, and 135–138 (HPTQ). Residues asparagine 169, aspartate 233, and 237–238 (SM) each bind L-ornithine. Carbamoyl phosphate contacts are provided by residues 275 to 276 (CL) and arginine 320.

Belongs to the aspartate/ornithine carbamoyltransferase superfamily. OTCase family.

It localises to the cytoplasm. The enzyme catalyses carbamoyl phosphate + L-ornithine = L-citrulline + phosphate + H(+). It participates in amino-acid biosynthesis; L-arginine biosynthesis; L-arginine from L-ornithine and carbamoyl phosphate: step 1/3. Reversibly catalyzes the transfer of the carbamoyl group from carbamoyl phosphate (CP) to the N(epsilon) atom of ornithine (ORN) to produce L-citrulline. The protein is Ornithine carbamoyltransferase of Vibrio vulnificus (strain YJ016).